Consider the following 321-residue polypeptide: Mitochondrial thiamine pyrophosphate carrier 1 (321 aa).

6 helical membrane-spanning segments follow: residues 12–28, 91–107, 126–146, 184–200, 221–237, and 284–301; these read GTRRQVVLAGGIAGLVS, LMYVCYGVIQFSAYRTT, FVAGATAGGLATASTYPLDLL, AAVGQIVPYMGLFFATY, AAGVIASVSSKTVMFPL, and GLTVSLFKAAPASAVTMW. Solcar repeat units lie at residues 12–110, 120–206, and 214–309; these read GTRR…TTQA, PPSA…LRPP, and PFGS…SLRL.

This sequence belongs to the mitochondrial carrier (TC 2.A.29) family.

The protein localises to the mitochondrion inner membrane. Functionally, mitochondrial transporter that mediates uptake of thiamine pyrophosphate (ThPP) into mitochondria. This is Mitochondrial thiamine pyrophosphate carrier 1 (tpc1) from Aspergillus niger (strain ATCC MYA-4892 / CBS 513.88 / FGSC A1513).